A 303-amino-acid chain; its full sequence is BAG family molecular chaperone regulator 3 (303 aa).

Residues 1–11 (MMKMNTGTSPS) show a composition bias toward polar residues. Residues 1 to 27 (MMKMNTGTSPSVIGGGTSGNEWESRPG) are disordered. In terms of domain architecture, Ubiquitin-like spans 45-119 (FRVRVKYGSV…LVVKEDPISQ (75 aa)). In terms of domain architecture, BAG spans 138 to 216 (SISDISFEVD…KYVEALDLLK (79 aa)). The disordered stretch occupies residues 249–268 (VEEEEEEPRNSNASSSSGTP). Residues 258–267 (NSNASSSSGT) are compositionally biased toward polar residues. The residue at position 263 (Ser-263) is a Phosphoserine.

In terms of assembly, binds to the ATPase domain of HSP70/HSC70 chaperones. Interacts with HSP70-1.

Co-chaperone that regulates diverse cellular pathways, such as programmed cell death and stress responses. The polypeptide is BAG family molecular chaperone regulator 3 (BAG3) (Arabidopsis thaliana (Mouse-ear cress)).